A 243-amino-acid polypeptide reads, in one-letter code: RWD domain-containing protein 1 (243 aa).

Threonine 2 is modified (N-acetylthreonine). Residues 10–114 (NELEALESIY…TAVQEKLNEI (105 aa)) enclose the RWD domain. The interval 142–197 (HGTPVTIENFLNWKAKFDAELLEIKKKRMKEEEQAGKNKLSGKQLFETDHNLDTSD) is interaction with DRG2. Position 144 is a phosphothreonine (threonine 144). The tract at residues 198 to 243 (IQFLEDAGNNVEVDESLFQEMDDLELEDDEDDPDYNPADPESDSAD) is disordered. The segment covering 209–243 (EVDESLFQEMDDLELEDDEDDPDYNPADPESDSAD) has biased composition (acidic residues).

This sequence belongs to the RWDD1/GIR2 family. As to quaternary structure, interacts with DRG2. Interacts with androgen receptor.

In terms of biological role, protects DRG2 from proteolytic degradation. The chain is RWD domain-containing protein 1 (RWDD1) from Homo sapiens (Human).